The following is a 443-amino-acid chain: D-inositol 3-phosphate glycosyltransferase (443 aa).

Histidine 30 is a binding site for 1D-myo-inositol 3-phosphate. UDP-N-acetyl-alpha-D-glucosamine-binding positions include 36 to 37 (QP) and glycine 44. Residues 41 to 46 (DAGGMN), lysine 99, tyrosine 132, threonine 156, and arginine 176 each bind 1D-myo-inositol 3-phosphate. Residues arginine 250, lysine 255, and arginine 316 each contribute to the UDP-N-acetyl-alpha-D-glucosamine site. Residues phenylalanine 325, arginine 326, and cysteine 328 each contribute to the Mg(2+) site. 2 residues coordinate UDP-N-acetyl-alpha-D-glucosamine: glutamate 338 and glutamate 346. Threonine 352 is a Mg(2+) binding site.

It belongs to the glycosyltransferase group 1 family. MshA subfamily. As to quaternary structure, homodimer.

It catalyses the reaction 1D-myo-inositol 3-phosphate + UDP-N-acetyl-alpha-D-glucosamine = 1D-myo-inositol 2-acetamido-2-deoxy-alpha-D-glucopyranoside 3-phosphate + UDP + H(+). Its function is as follows. Catalyzes the transfer of a N-acetyl-glucosamine moiety to 1D-myo-inositol 3-phosphate to produce 1D-myo-inositol 2-acetamido-2-deoxy-glucopyranoside 3-phosphate in the mycothiol biosynthesis pathway. This is D-inositol 3-phosphate glycosyltransferase from Stackebrandtia nassauensis (strain DSM 44728 / CIP 108903 / NRRL B-16338 / NBRC 102104 / LLR-40K-21).